Here is a 483-residue protein sequence, read N- to C-terminus: MEHYSLAQLSKALHNREFSSVELTQHCINKIQSNKDLNAFISLDEDQALKEAQSADLVLKNGEGKPLTGIPMALKDLFCTKRLNTTCASKMLANFQAPYDATIVTKFKQNGAIIIGKTNMDEFAMGSSNENSYFGSVKNPWDRERVPGGSSGGSAAAVAGNLVPFAIGSDTGGSIRQPAAFCGISGIKPTYGLVSRYGMVAFASSLDQAGPFAKSAEDLAMILHCIAGFDSKDSTSVDRVIPDYSAEIKKPVDKIRIGLPSCFFQPQVEKGIQDAIHNAVKLFENLGAEIIEIDLKLQPFWVPCYYVIACAEASSNLSRYDGIRFGHRSKSASTLIELITNSRSEGFGNEVKRRILTGTHVLSSGFFDAYYLHAQKVRRLIRDELITTLNSVDVILGPTTPTTAFKLGEKINDPIQNYLADVFTVAANLAGLPAISIPTGFENKLPIGLQLMGKHFSESRLLAIAHHYQQHTNWHLANPNKQG.

Residues lysine 75 and serine 150 each act as charge relay system in the active site. The active-site Acyl-ester intermediate is serine 174.

Belongs to the amidase family. GatA subfamily. Heterotrimer of A, B and C subunits.

It catalyses the reaction L-glutamyl-tRNA(Gln) + L-glutamine + ATP + H2O = L-glutaminyl-tRNA(Gln) + L-glutamate + ADP + phosphate + H(+). In terms of biological role, allows the formation of correctly charged Gln-tRNA(Gln) through the transamidation of misacylated Glu-tRNA(Gln) in organisms which lack glutaminyl-tRNA synthetase. The reaction takes place in the presence of glutamine and ATP through an activated gamma-phospho-Glu-tRNA(Gln). The protein is Glutamyl-tRNA(Gln) amidotransferase subunit A of Legionella pneumophila (strain Paris).